Here is a 431-residue protein sequence, read N- to C-terminus: Growth-regulating factor 9 (431 aa).

A QLQ domain is found at 24–59 (WMKAAQLMEFRMQALVYRYIEAGLRVPHHLVVPIWN). WRC domains follow at residues 89–133 (ETEP…LVES) and 307–351 (DNEP…VDTT). 4 short sequence motifs (bipartite nuclear localization signal) span residues 94 to 104 (RCRRTDGKKWR), 122 to 129 (RGRKRSRK), 312 to 322 (RCRRTDGKKWR), and 340 to 345 (RGMKKK).

Belongs to the GRF family. Interacts with GIF1. Detected in the shoot apical meristem (SAM) and in young leaf primordium.

It is found in the nucleus. In terms of biological role, transcription activator that plays a role in the regulation of cell expansion in leaf and cotyledons tissues. Component of a network formed by miR396, the GRFs and their interacting factors (GIFs) acting in the regulation of meristem function, at least partially through the control of cell proliferation. This Arabidopsis thaliana (Mouse-ear cress) protein is Growth-regulating factor 9 (GRF9).